A 526-amino-acid chain; its full sequence is Glutamyl-tRNA(Gln) amidotransferase subunit A, mitochondrial (526 aa).

Catalysis depends on charge relay system residues lysine 76 and serine 171. The active-site Acyl-ester intermediate is the serine 195.

The protein belongs to the amidase family. GatA subfamily. As to quaternary structure, subunit of the heterotrimeric GatCAB amidotransferase (AdT) complex, composed of A (QRSL1), B (GATB) and C (GATC) subunits.

It is found in the mitochondrion. The catalysed reaction is L-glutamyl-tRNA(Gln) + L-glutamine + ATP + H2O = L-glutaminyl-tRNA(Gln) + L-glutamate + ADP + phosphate + H(+). Allows the formation of correctly charged Gln-tRNA(Gln) through the transamidation of misacylated Glu-tRNA(Gln) in the mitochondria. The reaction takes place in the presence of glutamine and ATP through an activated gamma-phospho-Glu-tRNA(Gln). The chain is Glutamyl-tRNA(Gln) amidotransferase subunit A, mitochondrial from Canis lupus familiaris (Dog).